A 435-amino-acid chain; its full sequence is Putative F-box/FBD/LRR-repeat protein At5g56810 (435 aa).

The region spanning 14–62 is the F-box domain; the sequence is PDRISQLPNDLLFRILSLIPVSDAMSTSLLSKRWKSVWKMLPTLVYNEN. 6 LRR repeats span residues 64–95, 146–173, 174–199, 222–248, 266–291, and 316–341; these read CSNI…TLEL, LKLQ…YLTC, VNFE…FLQR, KEQA…NIFD, SVRV…SLDL, and YDNF…KLNH. The region spanning 353–404 is the FBD domain; the sequence is CSVSEPSSVPECLSFHLETFQWIGYAGTFEEIAAAVYVLKNARCLKNATISL.

In Arabidopsis thaliana (Mouse-ear cress), this protein is Putative F-box/FBD/LRR-repeat protein At5g56810.